We begin with the raw amino-acid sequence, 348 residues long: MIEADRLIAASGRDREEVQDRAIRPLSLDDYIGQPVVREQMALFIQAARGRSESLDHTLIFGPPGLGKTTLANIIAHEMGVSVKSTSGPILERPGDLAAMLTNLEPHDVLFIDEIHRLSPVVEEVLYPAMEDFQLDIMIGEGPAARSIKLDLPPFTLVGATTRAGMLTNPLRDRFGIVQRLEFYSDKDLATIVSRSANILGLAIEDLGAYEIARRARGTPRIANRLLRRVRDYAEVRGKGQITKAVADMALNLLDVDERGFDHSDRRLLLTMIEKFDGGPVGVDNLAAAISEERHTIEDVLEPYLIQQGYIMRTPRGRVVTRHAYLHFGLNIPGRLGEGGDFSEPGDE.

The segment at 4–184 (ADRLIAASGR…FGIVQRLEFY (181 aa)) is large ATPase domain (RuvB-L). ATP contacts are provided by residues isoleucine 23, arginine 24, glycine 65, lysine 68, threonine 69, threonine 70, 131–133 (EDF), arginine 174, tyrosine 184, and arginine 221. Threonine 69 provides a ligand contact to Mg(2+). The tract at residues 185 to 255 (SDKDLATIVS…VADMALNLLD (71 aa)) is small ATPAse domain (RuvB-S). Residues 258–348 (ERGFDHSDRR…GGDFSEPGDE (91 aa)) form a head domain (RuvB-H) region. DNA contacts are provided by arginine 294, arginine 313, and arginine 318.

The protein belongs to the RuvB family. As to quaternary structure, homohexamer. Forms an RuvA(8)-RuvB(12)-Holliday junction (HJ) complex. HJ DNA is sandwiched between 2 RuvA tetramers; dsDNA enters through RuvA and exits via RuvB. An RuvB hexamer assembles on each DNA strand where it exits the tetramer. Each RuvB hexamer is contacted by two RuvA subunits (via domain III) on 2 adjacent RuvB subunits; this complex drives branch migration. In the full resolvosome a probable DNA-RuvA(4)-RuvB(12)-RuvC(2) complex forms which resolves the HJ.

The protein resides in the cytoplasm. The enzyme catalyses ATP + H2O = ADP + phosphate + H(+). Its function is as follows. The RuvA-RuvB-RuvC complex processes Holliday junction (HJ) DNA during genetic recombination and DNA repair, while the RuvA-RuvB complex plays an important role in the rescue of blocked DNA replication forks via replication fork reversal (RFR). RuvA specifically binds to HJ cruciform DNA, conferring on it an open structure. The RuvB hexamer acts as an ATP-dependent pump, pulling dsDNA into and through the RuvAB complex. RuvB forms 2 homohexamers on either side of HJ DNA bound by 1 or 2 RuvA tetramers; 4 subunits per hexamer contact DNA at a time. Coordinated motions by a converter formed by DNA-disengaged RuvB subunits stimulates ATP hydrolysis and nucleotide exchange. Immobilization of the converter enables RuvB to convert the ATP-contained energy into a lever motion, pulling 2 nucleotides of DNA out of the RuvA tetramer per ATP hydrolyzed, thus driving DNA branch migration. The RuvB motors rotate together with the DNA substrate, which together with the progressing nucleotide cycle form the mechanistic basis for DNA recombination by continuous HJ branch migration. Branch migration allows RuvC to scan DNA until it finds its consensus sequence, where it cleaves and resolves cruciform DNA. The protein is Holliday junction branch migration complex subunit RuvB of Pseudomonas putida (strain GB-1).